A 414-amino-acid polypeptide reads, in one-letter code: 3-oxo-tetronate kinase (414 aa).

ATP contacts are provided by residues Ser255, 355-358 (GGET), and Gly398.

This sequence belongs to the four-carbon acid sugar kinase family.

The catalysed reaction is 3-dehydro-L-erythronate + ATP = 3-dehydro-4-O-phospho-L-erythronate + ADP + H(+). The enzyme catalyses 3-dehydro-D-erythronate + ATP = 3-dehydro-4-O-phospho-D-erythronate + ADP + H(+). Functionally, catalyzes the ATP-dependent phosphorylation of 3-oxo-tetronate to 3-oxo-tetronate 4-phosphate. The chain is 3-oxo-tetronate kinase from Actinobacillus succinogenes (strain ATCC 55618 / DSM 22257 / CCUG 43843 / 130Z).